The chain runs to 417 residues: NADH-quinone oxidoreductase subunit D (417 aa).

This sequence belongs to the complex I 49 kDa subunit family. In terms of assembly, NDH-1 is composed of 14 different subunits. Subunits NuoB, C, D, E, F, and G constitute the peripheral sector of the complex.

The protein localises to the cell inner membrane. The catalysed reaction is a quinone + NADH + 5 H(+)(in) = a quinol + NAD(+) + 4 H(+)(out). Its function is as follows. NDH-1 shuttles electrons from NADH, via FMN and iron-sulfur (Fe-S) centers, to quinones in the respiratory chain. The immediate electron acceptor for the enzyme in this species is believed to be ubiquinone. Couples the redox reaction to proton translocation (for every two electrons transferred, four hydrogen ions are translocated across the cytoplasmic membrane), and thus conserves the redox energy in a proton gradient. The chain is NADH-quinone oxidoreductase subunit D from Methylibium petroleiphilum (strain ATCC BAA-1232 / LMG 22953 / PM1).